The sequence spans 239 residues: Large ribosomal subunit protein mL67 (239 aa).

Belongs to the mitochondrion-specific ribosomal protein mL67 family. As to quaternary structure, component of the mitochondrial large ribosomal subunit (mt-LSU).

It localises to the nucleus. Its subcellular location is the mitochondrion. Functionally, component of the mitochondrial ribosome (mitoribosome), a dedicated translation machinery responsible for the synthesis of mitochondrial genome-encoded proteins, including at least some of the essential transmembrane subunits of the mitochondrial respiratory chain. The mitoribosomes are attached to the mitochondrial inner membrane and translation products are cotranslationally integrated into the membrane. mL67/MHR1 also has extraribosomal functions, being involved in regulation of mitochondrial DNA recombination, maintenance and repair, and generation of homoplasmic cells. mL67/MHR1 also acts as transcription factor involved in regulation of RNA polymerase II-dependent transcription. This Candida albicans (strain SC5314 / ATCC MYA-2876) (Yeast) protein is Large ribosomal subunit protein mL67 (MHR1).